The sequence spans 162 residues: Putative 4-hydroxy-4-methyl-2-oxoglutarate aldolase (162 aa).

Residues 75–78 (GDML) and Arg-97 each bind substrate. Asp-98 provides a ligand contact to a divalent metal cation.

This sequence belongs to the class II aldolase/RraA-like family. As to quaternary structure, homotrimer. A divalent metal cation serves as cofactor.

It carries out the reaction 4-hydroxy-4-methyl-2-oxoglutarate = 2 pyruvate. The enzyme catalyses oxaloacetate + H(+) = pyruvate + CO2. Catalyzes the aldol cleavage of 4-hydroxy-4-methyl-2-oxoglutarate (HMG) into 2 molecules of pyruvate. Also contains a secondary oxaloacetate (OAA) decarboxylase activity due to the common pyruvate enolate transition state formed following C-C bond cleavage in the retro-aldol and decarboxylation reactions. The protein is Putative 4-hydroxy-4-methyl-2-oxoglutarate aldolase of Azotobacter vinelandii (strain DJ / ATCC BAA-1303).